The sequence spans 248 residues: Probable transcriptional regulatory protein trd_1132 (248 aa).

It belongs to the TACO1 family.

The protein localises to the cytoplasm. This is Probable transcriptional regulatory protein trd_1132 from Thermomicrobium roseum (strain ATCC 27502 / DSM 5159 / P-2).